We begin with the raw amino-acid sequence, 51 residues long: uncharacterized protein (51 aa).

This sequence to E.coli YdfA.

This is an uncharacterized protein from Escherichia coli O157:H7.